We begin with the raw amino-acid sequence, 449 residues long: Phosphoglucosamine mutase (449 aa).

The active-site Phosphoserine intermediate is the S100. Positions 100, 241, 243, and 245 each coordinate Mg(2+). S100 bears the Phosphoserine mark.

It belongs to the phosphohexose mutase family. Requires Mg(2+) as cofactor. In terms of processing, activated by phosphorylation.

It carries out the reaction alpha-D-glucosamine 1-phosphate = D-glucosamine 6-phosphate. In terms of biological role, catalyzes the conversion of glucosamine-6-phosphate to glucosamine-1-phosphate. This chain is Phosphoglucosamine mutase, found in Caldicellulosiruptor bescii (strain ATCC BAA-1888 / DSM 6725 / KCTC 15123 / Z-1320) (Anaerocellum thermophilum).